The following is a 154-amino-acid chain: Endoribonuclease YbeY (154 aa).

The Zn(2+) site is built by His115, His119, and His125.

This sequence belongs to the endoribonuclease YbeY family. It depends on Zn(2+) as a cofactor.

Its subcellular location is the cytoplasm. Its function is as follows. Single strand-specific metallo-endoribonuclease involved in late-stage 70S ribosome quality control and in maturation of the 3' terminus of the 16S rRNA. The protein is Endoribonuclease YbeY of Halorhodospira halophila (strain DSM 244 / SL1) (Ectothiorhodospira halophila (strain DSM 244 / SL1)).